Consider the following 63-residue polypeptide: Serine protease inhibitor 3 (63 aa).

The N-terminal stretch at 1–23 (MAKLLAVFLVLLIAALVCEQALA) is a signal peptide. Intrachain disulfides connect Cys-24/Cys-39, Cys-34/Cys-52, and Cys-37/Cys-47. Positions 24-55 (CTPGSRKYDGCNWCTCSSGGAWICTLKYCPPS) constitute a Pacifastin domain.

It belongs to the protease inhibitor I19 family. In terms of tissue distribution, expressed in hemolymph, ovaries, testes and fat body of adults but are absent in the gut. Also present in larval hemolymph and fat body.

It localises to the secreted. In vitro, active against alpha-chymotrypsin. The chain is Serine protease inhibitor 3 from Schistocerca gregaria (Desert locust).